The sequence spans 294 residues: Small ribosomal subunit protein uS2 (294 aa).

It belongs to the universal ribosomal protein uS2 family.

This is Small ribosomal subunit protein uS2 (rpsB) from Mycoplasma pneumoniae (strain ATCC 29342 / M129 / Subtype 1) (Mycoplasmoides pneumoniae).